Here is a 148-residue protein sequence, read N- to C-terminus: Macrodomain Ter protein (148 aa).

This sequence belongs to the MatP family. In terms of assembly, homodimer.

It is found in the cytoplasm. Required for spatial organization of the terminus region of the chromosome (Ter macrodomain) during the cell cycle. Prevents early segregation of duplicated Ter macrodomains during cell division. Binds specifically to matS, which is a 13 bp signature motif repeated within the Ter macrodomain. The polypeptide is Macrodomain Ter protein (Pasteurella multocida (strain Pm70)).